A 591-amino-acid polypeptide reads, in one-letter code: Aspartate--tRNA(Asp/Asn) ligase (591 aa).

Glu174 contributes to the L-aspartate binding site. The aspartate stretch occupies residues Gln198–Lys201. L-aspartate is bound at residue Arg220. ATP contacts are provided by residues Arg220–Glu222 and Gln229. An L-aspartate-binding site is contributed by His450. Residue Glu483 coordinates ATP. Arg490 is an L-aspartate binding site. Gly535–Arg538 provides a ligand contact to ATP.

The protein belongs to the class-II aminoacyl-tRNA synthetase family. Type 1 subfamily. As to quaternary structure, homodimer.

It localises to the cytoplasm. It carries out the reaction tRNA(Asx) + L-aspartate + ATP = L-aspartyl-tRNA(Asx) + AMP + diphosphate. Aspartyl-tRNA synthetase with relaxed tRNA specificity since it is able to aspartylate not only its cognate tRNA(Asp) but also tRNA(Asn). Reaction proceeds in two steps: L-aspartate is first activated by ATP to form Asp-AMP and then transferred to the acceptor end of tRNA(Asp/Asn). This Pseudomonas fluorescens (strain SBW25) protein is Aspartate--tRNA(Asp/Asn) ligase.